Reading from the N-terminus, the 594-residue chain is Glutamate decarboxylase 1 (594 aa).

Residues Met1 to Ser13 are compositionally biased toward low complexity. The tract at residues Met1–Arg25 is disordered. Ser78 is subject to Phosphoserine. A 4-aminobutanoate-binding site is contributed by Gln190–Ser192. Lys405 carries the post-translational modification N6-(pyridoxal phosphate)lysine. Residue Arg567 coordinates 4-aminobutanoate.

It belongs to the group II decarboxylase family. Homodimer. It depends on pyridoxal 5'-phosphate as a cofactor.

The catalysed reaction is L-glutamate + H(+) = 4-aminobutanoate + CO2. Its function is as follows. Catalyzes the synthesis of the inhibitory neurotransmitter gamma-aminobutyric acid (GABA) with pyridoxal 5'-phosphate as cofactor. In Sus scrofa (Pig), this protein is Glutamate decarboxylase 1 (GAD1).